Consider the following 202-residue polypeptide: 3-isopropylmalate dehydratase small subunit (202 aa).

It belongs to the LeuD family. LeuD type 1 subfamily. Heterodimer of LeuC and LeuD.

It carries out the reaction (2R,3S)-3-isopropylmalate = (2S)-2-isopropylmalate. Its pathway is amino-acid biosynthesis; L-leucine biosynthesis; L-leucine from 3-methyl-2-oxobutanoate: step 2/4. In terms of biological role, catalyzes the isomerization between 2-isopropylmalate and 3-isopropylmalate, via the formation of 2-isopropylmaleate. In Paenarthrobacter aurescens (strain TC1), this protein is 3-isopropylmalate dehydratase small subunit.